The sequence spans 397 residues: Metal tolerance protein 4 (397 aa).

Over residues 1 to 19 (MEAKGENDARAPLLAERRR) the composition is skewed to basic and acidic residues. Residues 1-27 (MEAKGENDARAPLLAERRRNSVGSMRG) are disordered. At 1-104 (MEAKGENDAR…EQKQSEFAMK (104 aa)) the chain is on the cytoplasmic side. The chain crosses the membrane as a helical span at residues 105-122 (ISNYANMILLALKIYATI). The Vacuolar segment spans residues 123–126 (KSGS). A helical membrane pass occupies residues 127 to 147 (IAIAASTLDSLLDLMAGGILW). At 148–170 (FTHLSMKSINVYKYPIGKLRVQP) the chain is on the cytoplasmic side. Residues 171–191 (VGIIIFAAVMATLGFQVFVQA) traverse the membrane as a helical segment. Topologically, residues 192 to 208 (VEKLIVNETPDKLTPVQ) are vacuolar. A helical membrane pass occupies residues 209 to 229 (LTWLYSIMIFATVVKLALWLY). At 230–248 (CRTSGNKIVRAYAKDHYFD) the chain is on the cytoplasmic side. Residues 249–269 (VVTNVVGLAAAVLGDMFYWWI) form a helical membrane-spanning segment. Position 270 (aspartate 270) is a topological domain, vacuolar. A helical membrane pass occupies residues 271–291 (PVGAIALAVYTITNWSGTVWE). Over 292–397 (NAVSLVGESA…ILSKLPSSQP (106 aa)) the chain is Cytoplasmic.

This sequence belongs to the cation diffusion facilitator (CDF) transporter (TC 2.A.4) family. SLC30A subfamily.

It is found in the vacuole membrane. Functionally, involved in sequestration of excess metal in the cytoplasm into vacuoles to maintain metal homeostasis. This chain is Metal tolerance protein 4 (MTP4), found in Oryza sativa subsp. japonica (Rice).